The primary structure comprises 896 residues: DNA mismatch repair protein MutS (896 aa).

ATP is bound at residue Gly618–Ser625. Residues Gly805 to Ser825 are compositionally biased toward basic and acidic residues. Residues Gly805 to Asp826 are disordered.

It belongs to the DNA mismatch repair MutS family.

Functionally, this protein is involved in the repair of mismatches in DNA. It is possible that it carries out the mismatch recognition step. This protein has a weak ATPase activity. This is DNA mismatch repair protein MutS from Halothermothrix orenii (strain H 168 / OCM 544 / DSM 9562).